Reading from the N-terminus, the 508-residue chain is Acetyl-coenzyme A carboxylase carboxyl transferase subunit beta, chloroplastic (508 aa).

2 disordered regions span residues 30–51 (PIEN…NIQG) and 173–234 (NSSN…SSTH). Over residues 35–47 (SESKDPNRNDTDK) the composition is skewed to basic and acidic residues. The span at 173–219 (NSSNNNSSNENSSNENSSNENSSNENSSNDYISSSISSQSENSSQNE) shows a compositional bias: low complexity. Polar residues predominate over residues 220–234 (DITTSDQTIPESSTH). One can recognise a CoA carboxyltransferase N-terminal domain in the interval 244 to 508 (LWVQCENCYG…LHTFFPLNQN (265 aa)). Zn(2+) contacts are provided by Cys248, Cys251, Cys267, and Cys270. The C4-type zinc-finger motif lies at 248 to 270 (CENCYGLNYKKFFKSKMHLCEQC).

This sequence belongs to the AccD/PCCB family. Acetyl-CoA carboxylase is a heterohexamer composed of biotin carboxyl carrier protein, biotin carboxylase and 2 subunits each of ACCase subunit alpha and ACCase plastid-coded subunit beta (accD). Zn(2+) serves as cofactor.

It localises to the plastid. It is found in the chloroplast stroma. It carries out the reaction N(6)-carboxybiotinyl-L-lysyl-[protein] + acetyl-CoA = N(6)-biotinyl-L-lysyl-[protein] + malonyl-CoA. The protein operates within lipid metabolism; malonyl-CoA biosynthesis; malonyl-CoA from acetyl-CoA: step 1/1. Its function is as follows. Component of the acetyl coenzyme A carboxylase (ACC) complex. Biotin carboxylase (BC) catalyzes the carboxylation of biotin on its carrier protein (BCCP) and then the CO(2) group is transferred by the transcarboxylase to acetyl-CoA to form malonyl-CoA. The polypeptide is Acetyl-coenzyme A carboxylase carboxyl transferase subunit beta, chloroplastic (Lactuca sativa (Garden lettuce)).